A 956-amino-acid polypeptide reads, in one-letter code: Chromatin assembly factor 1 subunit A (956 aa).

The binds to PCNA stretch occupies residues 1–49 (MLEELECGAPGARGAATAMDCKDRPAFPVKKLIQARLPFKRLNLVPKGK). Positions 1-314 (MLEELECGAP…QHSSTSPFPT (314 aa)) are binds to CBX1 chromo shadow domain. 2 disordered regions span residues 45 to 65 (VPKG…QSKS) and 122 to 155 (DSNE…EDTG). Positions 56 to 65 (DQGTSVQSKS) are enriched in polar residues. Serine 65, serine 123, serine 138, serine 141, and serine 143 each carry phosphoserine. A Glycyl lysine isopeptide (Lys-Gly) (interchain with G-Cter in SUMO1); alternate cross-link involves residue lysine 182. Residue lysine 182 forms a Glycyl lysine isopeptide (Lys-Gly) (interchain with G-Cter in SUMO2); alternate linkage. The tract at residues 188–222 (VGCGGAGRRGDSQECSPRSCPELTSGPRMCPRKEQ) is disordered. 2 positions are modified to phosphoserine: serine 206 and serine 224. The PxVxL motif motif lies at 233-246 (FKGKVPMVVLQDIL). Disordered stretches follow at residues 250 to 432 (PPQI…KRLR) and 599 to 639 (DSDE…VPHG). Composition is skewed to low complexity over residues 282–296 (LSHS…TSSP) and 307–317 (SSTSPFPTSTP). Serine 310 is modified (phosphoserine). Over residues 329 to 432 (STEKNKLRLQ…RKKEEEKRLR (104 aa)) the composition is skewed to basic and acidic residues. Composition is skewed to acidic residues over residues 599–610 (DSDEEWEEEEPG) and 618–633 (GDDD…EDDG). Residues 642–678 (SEDEGVTEECADPENHKVRQKLKAKEWDEFLAKGKRF) are necessary for homodimerization and competence for chromatin assembly. The interval 660-956 (RQKLKAKEWD…TLTASPLGAS (297 aa)) is binds to p60. The residue at position 722 (threonine 722) is a Phosphothreonine. The disordered stretch occupies residues 765–790 (LLSNHTGSPRSPSTTYLHTPTPSEDA). Positions 767–786 (SNHTGSPRSPSTTYLHTPTP) are enriched in polar residues. Phosphoserine is present on residues serine 772, serine 775, and serine 803. 2 disordered regions span residues 844–873 (SVPS…KRKS) and 933–956 (SGAG…LGAS). Residues 855 to 866 (SVPSTGPSQGTP) show a composition bias toward polar residues. Residue threonine 865 is modified to Phosphothreonine. 3 positions are modified to phosphoserine: serine 868, serine 873, and serine 951.

The protein belongs to the CHAF1A family. In terms of assembly, homodimer. Part of the CAF-1 complex that contains RBBP4, CHAF1B and CHAF1A. CHAF1A binds directly to CHAF1B. Only minor amounts of RBBP4 are complexed with CHAF1A and CHAF1B in G1 phase. Interacts with PCNA; the interaction is direct. Interacts (via the PxVxL motif) with CBX5; the interaction is direct. Interacts with MBD1. Interacts with histones H3.1, H3.2 and H3.1t.

The protein localises to the nucleus. Functionally, acts as a component of the histone chaperone complex chromatin assembly factor 1 (CAF-1), which assembles histone octamers onto DNA during replication and repair. CAF-1 performs the first step of the nucleosome assembly process, bringing newly synthesized histones H3 and H4 to replicating DNA; histones H2A/H2B can bind to this chromatin precursor subsequent to DNA replication to complete the histone octamer. It may play a role in heterochromatin maintenance in proliferating cells by bringing newly synthesized cbx proteins to heterochromatic DNA replication foci. This chain is Chromatin assembly factor 1 subunit A, found in Homo sapiens (Human).